Here is a 445-residue protein sequence, read N- to C-terminus: Chromosome partition protein MukF (445 aa).

A leucine-zipper region spans residues 213-241; that stretch reads LSETSNTLKELQDTLQAAGDELQTQILDI.

The protein belongs to the MukF family. Interacts, and probably forms a ternary complex, with MukE and MukB via its C-terminal region. The complex formation is stimulated by calcium or magnesium. It is required for an interaction between MukE and MukB.

It localises to the cytoplasm. The protein localises to the nucleoid. Its function is as follows. Involved in chromosome condensation, segregation and cell cycle progression. May participate in facilitating chromosome segregation by condensation DNA from both sides of a centrally located replisome during cell division. Not required for mini-F plasmid partitioning. Probably acts via its interaction with MukB and MukE. Overexpression results in anucleate cells. It has a calcium binding activity. This chain is Chromosome partition protein MukF, found in Vibrio vulnificus (strain CMCP6).